The chain runs to 188 residues: Ribosome-recycling factor (188 aa).

The protein belongs to the RRF family.

Its subcellular location is the cytoplasm. In terms of biological role, responsible for the release of ribosomes from messenger RNA at the termination of protein biosynthesis. May increase the efficiency of translation by recycling ribosomes from one round of translation to another. In Gluconobacter oxydans (strain 621H) (Gluconobacter suboxydans), this protein is Ribosome-recycling factor.